A 343-amino-acid chain; its full sequence is Transcription factor BPE (343 aa).

In terms of domain architecture, bHLH spans 142-192 (QATDSHSLAERARREKISERMKILQDLVPGCNKVIGKALVLDEIINYIQSL).

In terms of assembly, homodimer. As to expression, specifically expressed in flowers, mostly in petals, inflorescence and flower buds. Expressed ubiquitously (leaves, flowers and stems).

Its subcellular location is the nucleus. Involved in the control of petal size, by interfering with postmitotic cell expansion to limit final petal cell size. This chain is Transcription factor BPE (BPE), found in Arabidopsis thaliana (Mouse-ear cress).